We begin with the raw amino-acid sequence, 452 residues long: Mitochondrial import inner membrane translocase subunit TIM44 (452 aa).

Position 128 is a phosphothreonine (T128). 166–173 (GGEKLGRT) contributes to the ATP binding site. Residue S180 is modified to Phosphoserine. The residue at position 217 (K217) is an N6-succinyllysine.

Belongs to the Tim44 family. As to quaternary structure, probable component of the PAM complex at least composed of a mitochondrial HSP70 protein, GRPEL1 or GRPEL2, TIMM44, TIMM16/PAM16 and TIMM14/DNAJC19. The complex interacts with the TIMM23 component of the TIM23 complex. Interacts with SLC25A4/ANT1 and SLC25A5/ANT2; leading to inhibit the presequence translocase TIMM23, thereby promoting stabilization of PINK1.

The protein resides in the mitochondrion inner membrane. Its subcellular location is the mitochondrion matrix. In terms of biological role, essential component of the PAM complex, a complex required for the translocation of transit peptide-containing proteins from the inner membrane into the mitochondrial matrix in an ATP-dependent manner. Recruits mitochondrial HSP70 to drive protein translocation into the matrix using ATP as an energy source. This is Mitochondrial import inner membrane translocase subunit TIM44 (TIMM44) from Homo sapiens (Human).